The sequence spans 448 residues: Phosphoglucosamine mutase (448 aa).

Serine 104 acts as the Phosphoserine intermediate in catalysis. The Mg(2+) site is built by serine 104, aspartate 241, aspartate 243, and aspartate 245. Serine 104 bears the Phosphoserine mark.

Belongs to the phosphohexose mutase family. It depends on Mg(2+) as a cofactor. Activated by phosphorylation.

It carries out the reaction alpha-D-glucosamine 1-phosphate = D-glucosamine 6-phosphate. In terms of biological role, catalyzes the conversion of glucosamine-6-phosphate to glucosamine-1-phosphate. The protein is Phosphoglucosamine mutase of Nocardioides sp. (strain ATCC BAA-499 / JS614).